We begin with the raw amino-acid sequence, 187 residues long: Meiotically up-regulated protein C1442.13c (187 aa).

Disordered regions lie at residues 15-46 and 119-145; these read QWEN…LSNE and IQEG…PAIN. Residues 26–41 show a composition bias toward basic residues; that stretch reads PPRKPKIVQPKKKPSK. In terms of domain architecture, G-patch spans 145 to 187; it reads NNGKGKQLLEMMGWSRGKGLGSENQGMVDPVVAVVKNNKQGLH.

The protein localises to the nucleus. Its subcellular location is the cytoplasm. It localises to the cytoskeleton. The protein resides in the microtubule organizing center. It is found in the spindle pole body. Its function is as follows. Has a role in meiosis and sporulation. Required for meiotic chromosome segregation. The polypeptide is Meiotically up-regulated protein C1442.13c (Schizosaccharomyces pombe (strain 972 / ATCC 24843) (Fission yeast)).